An 879-amino-acid chain; its full sequence is MNQPYSAMRNNIHMLGDFLGETIREAQGNEILELIESIRVLSRDSRAGDEKAREQLLDKLANISTENVLPVARAFSQFLNLTNIAEQYQTISRHHQDESLGNRSLSALFARLKAQGTPVETVIKTVEKLSIELVLTAHPTEVTRRSLVHKHVEINKCLGQLEHDDLTEAEQTKLKRRLMQLIALAWHTNEIRAARPTPVDEAKWGMAIIENSLWKAVPDFCRELNFQLEKHFDVQYEVALSPVRFSSWMGGDRDGNPFVTAEITQKVLRMNRWKAAELFLNDVSDLVEELSIVQCTPEFREKYGDHIEPYRVVVKGLRSKLQKTLTYFGELIEAKPTTVDPSEIITCDNDLWEPLYDCYQSLHACGMRIIANGSLLDCLRRIRCFGLGLSRLDIRQESSRHETAIAEITRYIGLGDYAQWTEDDKQAFLVRELSSRRPLVPTNWTPSPETQEILDTCKVVAQQPEGTISAYVISMAREASDVLAVHLLLKEAGCNYTLPVAPLFETLDDLDHSEKVMTDLFNIGWYRGVINNYQMVMIGYSDSAKDAGMLAASWAQYRAQEALVNLAEKYHIELVLFHGRGGTVGRGGAPAHAALLSQPPRSLKSGLRVTEQGEMIRFKLGLPAVAVETLNLYASAILEANLLPPPEPKQKWRDIMDKGAAISCEIYRGVVRGEPDFVPYFRSATPEQELGKLPLGSRPSKRNPNGGVESLRAIPWIFAWMQNRLMLPAWLGAGAALRQMIEQGEESTLKEMCNEWPFFSTRIGMLEMVFSKADLWLAEHYDQRLVAKELHRLGKTLRAQLSADIQTVLTLAHDGQLMADLPWIAESIALRNVYTDPLNLLQVELLQRLRSQGEVRDPQLEQALMITITGIAAGMRNTG.

Catalysis depends on residues histidine 138 and lysine 545.

Belongs to the PEPCase type 1 family. Requires Mg(2+) as cofactor.

It carries out the reaction oxaloacetate + phosphate = phosphoenolpyruvate + hydrogencarbonate. Functionally, forms oxaloacetate, a four-carbon dicarboxylic acid source for the tricarboxylic acid cycle. The chain is Phosphoenolpyruvate carboxylase from Actinobacillus pleuropneumoniae serotype 5b (strain L20).